The chain runs to 357 residues: Isoflavone 7-O-methyltransferase (357 aa).

Residues Val-200–Gly-203, Asp-224, Asp-224–Arg-225, Asp-244–Met-245, and Lys-258 each bind S-adenosyl-L-methionine. His-262 (proton acceptor) is an active-site residue.

It belongs to the class I-like SAM-binding methyltransferase superfamily. Cation-independent O-methyltransferase family. COMT subfamily.

It carries out the reaction a 7-hydroxyisoflavone + S-adenosyl-L-methionine = a 7-methoxyisoflavone + S-adenosyl-L-homocysteine + H(+). In terms of biological role, 7-O-methyltransferase involved in the biosynthesis of isoformononetin. Can use daidzein as substrate, but not medicarpin or 2,7,4'-trihydroxyisoflavanone. This Glycyrrhiza echinata (Licorice) protein is Isoflavone 7-O-methyltransferase (D7OMT).